The primary structure comprises 153 residues: Transcriptional regulator MraZ (153 aa).

2 SpoVT-AbrB domains span residues 7–61 (KEKH…LPDV) and 90–133 (LEMV…EPGR).

The protein belongs to the MraZ family. Forms oligomers.

It localises to the cytoplasm. It is found in the nucleoid. The chain is Transcriptional regulator MraZ from Chlorobium luteolum (strain DSM 273 / BCRC 81028 / 2530) (Pelodictyon luteolum).